A 166-amino-acid chain; its full sequence is HTH-type transcriptional regulator PetP (166 aa).

The region spanning 17–152 is the HTH marR-type domain; it reads DEQLRKGIEA…FRQVLEAMMD (136 aa). Residues 66–89 constitute a DNA-binding region (H-T-H motif); that stretch reads VTTLISVLGVTKQSLNRVLRTLID.

Its function is as follows. Necessary for photosynthetic and respiratory growth. The sequence is that of HTH-type transcriptional regulator PetP (petP) from Rhodobacter capsulatus (strain ATCC BAA-309 / NBRC 16581 / SB1003).